Reading from the N-terminus, the 451-residue chain is D-aminoacyl-tRNA deacylase (451 aa).

A disordered region spans residues 410 to 437 (RTADIPEGPKFGKLASGESVEIDGEEID).

Belongs to the DtdA deacylase family. Monomer. Requires Zn(2+) as cofactor.

The enzyme catalyses a D-aminoacyl-tRNA + H2O = a tRNA + a D-alpha-amino acid + H(+). The catalysed reaction is glycyl-tRNA(Ala) + H2O = tRNA(Ala) + glycine + H(+). D-aminoacyl-tRNA deacylase with broad substrate specificity. By recycling D-aminoacyl-tRNA to D-amino acids and free tRNA molecules, this enzyme counteracts the toxicity associated with the formation of D-aminoacyl-tRNA entities in vivo. The polypeptide is D-aminoacyl-tRNA deacylase (Haloarcula marismortui (strain ATCC 43049 / DSM 3752 / JCM 8966 / VKM B-1809) (Halobacterium marismortui)).